A 441-amino-acid chain; its full sequence is GTPase Der (441 aa).

EngA-type G domains are found at residues 4–169 (PVVA…PEDI) and 178–353 (IKVA…DQAA). GTP-binding positions include 10–17 (GRPNVGKS), 57–61 (DTGGI), 120–123 (NKVD), 184–191 (GKPNAGKS), 231–235 (DTAGI), and 296–299 (NKWD). A KH-like domain is found at 354-438 (FRISTGMLND…PIRFIHRQRE (85 aa)).

It belongs to the TRAFAC class TrmE-Era-EngA-EngB-Septin-like GTPase superfamily. EngA (Der) GTPase family. Associates with the 50S ribosomal subunit.

Functionally, GTPase that plays an essential role in the late steps of ribosome biogenesis. The chain is GTPase Der from Ruminiclostridium cellulolyticum (strain ATCC 35319 / DSM 5812 / JCM 6584 / H10) (Clostridium cellulolyticum).